We begin with the raw amino-acid sequence, 466 residues long: MSDLRVRFAPSPTGYLHVGGARTALFNWLYARHFGGTFILRIEDTDTERSTQQSVDAILQGMEWLGLDWDEGPFYQTDNFPLYKQHVQKLLDEGKAYRCWCRPEELEAKREAAMAEGRKPKYDGTCRHRQDQPLDQPHVIRFKAPEEGETAFDDLIKGRIAFPNAELDDLIISRTDGTPTYNFCVVIDDALMRISHVIRGDDHVNNTPRQIQLYEALGYPVPIFAHVPMILGSDKARLSKRHGATSVIAYRDMGYLPEALNNYLVRLGWSNGDDEIFSREEMVQKFDIANVGRSPSVFNPDKLNWLNAHYIKTGNPARLAELLQPHLAGRGVADCSTPDLAGVISTLQERAQTLEEMAERALFYYQAPQQYDEAALSKFDKPHLAAVFSAVAARLSATTAAAAPEFDTLLKEICAEGGWKMPHVGQPLRIALSGSTQAPGIGEIITALGVNETIARIERAREFLAH.

The 'HIGH' region motif lies at 10 to 20 (PSPTGYLHVGG). Residues cysteine 99, cysteine 101, cysteine 126, and histidine 128 each contribute to the Zn(2+) site. The 'KMSKS' region signature appears at 237–241 (RLSKR). Lysine 240 lines the ATP pocket.

This sequence belongs to the class-I aminoacyl-tRNA synthetase family. Glutamate--tRNA ligase type 1 subfamily. In terms of assembly, monomer. It depends on Zn(2+) as a cofactor.

It is found in the cytoplasm. The catalysed reaction is tRNA(Glu) + L-glutamate + ATP = L-glutamyl-tRNA(Glu) + AMP + diphosphate. Functionally, catalyzes the attachment of glutamate to tRNA(Glu) in a two-step reaction: glutamate is first activated by ATP to form Glu-AMP and then transferred to the acceptor end of tRNA(Glu). The polypeptide is Glutamate--tRNA ligase (Trichlorobacter lovleyi (strain ATCC BAA-1151 / DSM 17278 / SZ) (Geobacter lovleyi)).